The following is a 551-amino-acid chain: Adenylyl cyclase-associated protein (551 aa).

Residues 34–55 (SGHKPLPNMHRPSRDSNSQTHN) are disordered. Phosphoserine is present on Ser92. Thr96 carries the phosphothreonine modification. Polar residues predominate over residues 288–300 (SASKTQAPSSGDS). Disordered regions lie at residues 288-333 (SASK…NKGD) and 348-395 (TSGL…PVKP). Residues 305 to 315 (LPPPPPPPPPS) are compositionally biased toward pro residues. Positions 352-361 (RKVDKSEMTH) are enriched in basic and acidic residues. A C-CAP/cofactor C-like domain is found at 395 to 529 (PPRIELENTK…EEGDYAERAV (135 aa)).

Belongs to the CAP family.

The N-terminal domain binds to adenylyl cyclase, thereby enabling adenylyl cyclase to be activated by upstream regulatory signals, such as Ras. The C-terminal domain is required for normal cellular morphology and growth control. The protein is Adenylyl cyclase-associated protein (cap1) of Schizosaccharomyces pombe (strain 972 / ATCC 24843) (Fission yeast).